The primary structure comprises 318 residues: Geranylfarnesyl diphosphate synthase (318 aa).

Residues K31, R34, and H65 each coordinate isopentenyl diphosphate. Residues D72 and D76 each contribute to the Mg(2+) site. R81 contacts an all-trans-polyprenyl diphosphate. R82 contributes to the isopentenyl diphosphate binding site. An all-trans-polyprenyl diphosphate contacts are provided by K166, T167, and Q204.

The protein belongs to the FPP/GGPP synthase family. Homodimer. Mg(2+) is required as a cofactor.

It catalyses the reaction isopentenyl diphosphate + (2E,6E,10E)-geranylgeranyl diphosphate = (2E,6E,10E,14E)-geranylfarnesyl diphosphate + diphosphate. In terms of biological role, probably involved in biosynthesis of the precursor for C25 (sesterterpanyl chain) moiety of C25-C25 diether (2,3-di-O-sesterterpanyl-sn-glycero) membrane lipid. Catalyzes the condensation of isopentenyl pyrophosphate with the allylic pyrophosphates to yield all-trans geranylfarnesyl diphosphate (GFPP). Geranylgeranyl diphosphate (GGPP) is the preferred substrate, however methylallyl diphosphate (DMAPP), farnesyl diphosphate (FPP) and geranyl diphosphate (GPP) can also be used as allylic substrate. The protein is Geranylfarnesyl diphosphate synthase (fgs) of Aeropyrum pernix.